Here is a 382-residue protein sequence, read N- to C-terminus: Intermediate transcription factor 3 large subunit (382 aa).

It belongs to the orthopoxvirus OPG150 family. As to quaternary structure, heterodimerizes with protein A8 to form the virus intermediate transcription factor (VITF)-3.

Acts with RNA polymerase to initiate transcription from intermediate gene promoters. The polypeptide is Intermediate transcription factor 3 large subunit (OPG150) (Homo sapiens (Human)).